A 255-amino-acid polypeptide reads, in one-letter code: Fe(3+) dicitrate transport ATP-binding protein FecE (255 aa).

The ABC transporter domain maps to 3–238; the sequence is LRTENLTVSY…GLLRTVFSVE (236 aa). Position 35 to 42 (35 to 42) interacts with ATP; that stretch reads GPNGCGKS.

It belongs to the ABC transporter superfamily. As to quaternary structure, the complex is composed of two ATP-binding proteins (FecE), two transmembrane proteins (FecC and FecD) and a solute-binding protein (FecB).

Its subcellular location is the cell inner membrane. The enzyme catalyses iron(III) dicitrate(out) + ATP + H2O = iron(III) dicitrate(in) + ADP + phosphate + H(+). Its function is as follows. Part of the ABC transporter complex FecBCDE involved in citrate-dependent Fe(3+) uptake. Binds ATP. Probably responsible for energy coupling to the transport system. This Escherichia coli (strain K12) protein is Fe(3+) dicitrate transport ATP-binding protein FecE.